The sequence spans 262 residues: Ribosomal RNA small subunit methyltransferase A (262 aa).

6 residues coordinate S-adenosyl-L-methionine: Asn13, Leu15, Gly40, Glu61, Asp85, and Asn105.

The protein belongs to the class I-like SAM-binding methyltransferase superfamily. rRNA adenine N(6)-methyltransferase family. RsmA subfamily.

Its subcellular location is the cytoplasm. It catalyses the reaction adenosine(1518)/adenosine(1519) in 16S rRNA + 4 S-adenosyl-L-methionine = N(6)-dimethyladenosine(1518)/N(6)-dimethyladenosine(1519) in 16S rRNA + 4 S-adenosyl-L-homocysteine + 4 H(+). In terms of biological role, specifically dimethylates two adjacent adenosines (A1518 and A1519) in the loop of a conserved hairpin near the 3'-end of 16S rRNA in the 30S particle. May play a critical role in biogenesis of 30S subunits. This is Ribosomal RNA small subunit methyltransferase A from Laribacter hongkongensis (strain HLHK9).